We begin with the raw amino-acid sequence, 152 residues long: Putative RRN3-like protein RRN3P1 (152 aa).

The protein belongs to the RRN3 family.

The chain is Putative RRN3-like protein RRN3P1 (RRN3P1) from Homo sapiens (Human).